We begin with the raw amino-acid sequence, 262 residues long: MVKVSFNSALAHKEAANKEEENSQVLILPPDAKEPEDVVVPAGHKRAWCWCMCFGLAFMLAGVILGGAYLYKYFAFQQGGVYFCGIKYIEDGLSLPESGAQLKSARYHTIEQNIQILEEEDVEFISVPVPEFADSDPADIVHDFHRRLTAYLDLSLDKCYVIPLNTSVVMPPKNFLELLINIKAGTYLPQSYLIHEQMIVTDRIENVDQLGFFIYRLCRGKETYKLQRKEAMKGIQKREAVNCRKIRHFENRFAMETLICEQ.

The Cytoplasmic segment spans residues 1-49; the sequence is MVKVSFNSALAHKEAANKEEENSQVLILPPDAKEPEDVVVPAGHKRAWC. A helical; Signal-anchor for type II membrane protein membrane pass occupies residues 50–70; it reads WCMCFGLAFMLAGVILGGAYL. Residues 71–262 are Lumenal-facing; sequence YKYFAFQQGG…FAMETLICEQ (192 aa). The BRICHOS domain maps to 132-226; it reads FADSDPADIV…LCRGKETYKL (95 aa). Cystine bridges form between cysteine 159–cysteine 218 and cysteine 243–cysteine 260. An N-linked (GlcNAc...) asparagine glycan is attached at asparagine 165.

This sequence belongs to the ITM2 family. As to quaternary structure, homodimer; disulfide-linked. In terms of tissue distribution, expressed in areas of chondro-osteogenic transition and widely in the nervous system.

It localises to the golgi apparatus membrane. Its subcellular location is the cell membrane. It is found in the endosome membrane. Plays a role in the induction of neurite outgrowth. This chain is Integral membrane protein 2B (ITM2B), found in Gallus gallus (Chicken).